Consider the following 688-residue polypeptide: Protein SDA1 homolog (688 aa).

3 positions are modified to phosphoserine: S232, S234, and S236. Residues 254–318 adopt a coiled-coil conformation; sequence KKSSKNKKKL…ERFEVKMMLM (65 aa). Residues 484 to 498 are compositionally biased toward acidic residues; the sequence is VENEEENAEGDEDGW. The interval 484–524 is disordered; that stretch reads VENEEENAEGDEDGWESASLSDEADSDGEWVDVHHSSDEEQ. Basic and acidic residues predominate over residues 514–524; the sequence is VDVHHSSDEEQ. Phosphoserine is present on residues S586 and S596. The interval 605–688 is disordered; that stretch reads KKPKSDKETR…ALLKKRKRMK (84 aa). The span at 668 to 681 shows a compositional bias: basic and acidic residues; the sequence is SFREKQLALRDALL.

Belongs to the SDA1 family.

It is found in the nucleus. The protein localises to the nucleolus. Functionally, required for 60S pre-ribosomal subunits export to the cytoplasm. The sequence is that of Protein SDA1 homolog (SDAD1) from Bos taurus (Bovine).